Reading from the N-terminus, the 465-residue chain is MEPKDFKVIIIGGSVAGLTLALSLNKIGIDYVVLEKRAHIAPQEGASIGILPHGGRILEQLGLFEAVERSIEPLHTAHIRFPDGFEYTTASPSVLNDRFGLPLAFLERQKMLQILFDAQTEKSKILCGKKVTKIEDFEESMTVYTEDGSTYTGDLVVGADGVHSQVRTEMWRLAEKMQPGIVSNTEKSSMTVQYTCVFGISAAVPGLVPGEQVASFNDKRSFLTFPGKNGRVFWFLINRLDQEHSYSSAPRFSMKDTETICHQFLEDIIYGDVRFNDLWSRKEVCSVTALEEGAFRTWSYRRIVCIGDSMHKMAPNTGQGANCAIEDVAALANMLHACVVTTERHCKPTTKELSTLLEGYTKRRFHRIKKIYQASRLVVRLQARETLLLRMMGRYYIPRSGDVPADVASKMIAGAVALDFLPIPSRSGPGWISFKTMESRLRYWIVGGAIPVLLIMSMWLWQVVL.

A helical membrane pass occupies residues 9-29; that stretch reads IIIGGSVAGLTLALSLNKIGI. Residues glutamate 35, glycine 49, arginine 108, aspartate 308, and alanine 321 each coordinate FAD.

The protein belongs to the paxM FAD-dependent monooxygenase family. FAD serves as cofactor.

The protein resides in the membrane. It functions in the pathway secondary metabolite biosynthesis; terpenoid biosynthesis. FAD-dependent monooxygenase; part of the gene cluster that mediates the biosynthesis of 15-deoxyoxalicine B. The first step of the pathway is the synthesis of nicotinyl-CoA from nicotinic acid by the nicotinic acid-CoA ligase olcI. Nicotinyl-CoA is then a substrate of polyketide synthase olcA to produce 4-hydroxy-6-(3-pyridinyl)-2H-pyran-2-one (HPPO) which is further prenylated by the polyprenyl transferase olcH to yield geranylgeranyl-HPPO. Geranylgeranyl pyrophosphate is provided by the cluster-specific geranylgeranyl pyrophosphate synthase olcC. The FAD-dependent monooxygenase olcE catalyzes the epoxidation of geranylgeranyl-HPPO and the terpene cyclase olcD catalyzes the cyclization of the terpenoid component, resulting in the formation of the tricyclic terpene moiety seen in predecaturin E. The cytochrome P450 monooxygenase then catalyzes the allylic oxidation of predecaturin E, which is followed by spirocylization with concomitant loss of one molecule of water to form decaturin E. Decaturin E is the substrate of the cytochrome P450 monooxygenase olcJ which hydroxylates it at the C-29 position to form decaturin F. The short-chain dehydrogenase/reductase olcF may catalyze the oxidation of decaturin F to generate the 29-hydroxyl-27-one intermediate, and subsequent hemiacetal formation probably leads to the formation of decaturin C. The dioxygenase olcK may be a peroxisomal enzyme that catalyzes the hydroxylation of decaturin C into decaturin A once decaturin C is shuttled into the peroxisome by the MFS transporter olcL. Finally the cytochrome P450 monooxygenase olcB catalyzes the oxidative rearrangement to yield 15-deoxyoxalicine B. In the absence of olcJ, decaturin E may be shunted to a pathway in which it is oxidized to a ketone, possibly by olcF, to form decaturin D, which undergoes further allylic oxidation to yield decaturin G. Moreover, in the absence of oclK or oclL, oclB can convert decaturin C into 15-deoxyoxalicine A. This chain is FAD-dependent monooxygenase olcE, found in Penicillium canescens.